We begin with the raw amino-acid sequence, 224 residues long: Germin-like protein 8-10 (224 aa).

The N-terminal stretch at 1 to 22 (MASPSICLLAALLALVSWQAIA) is a signal peptide. An intrachain disulfide couples C32 to C47. A Cupin type-1 domain is found at 62–212 (AMLDTPRKTN…AFQVEKGTID (151 aa)). N76 carries an N-linked (GlcNAc...) asparagine glycan. Mn(2+) contacts are provided by H109, H111, and E116. The N-linked (GlcNAc...) asparagine glycan is linked to N135. Residue H157 participates in Mn(2+) binding.

Belongs to the germin family. In terms of assembly, oligomer (believed to be a pentamer but probably hexamer).

Its subcellular location is the secreted. It localises to the extracellular space. The protein resides in the apoplast. Functionally, plays a role in broad-spectrum disease resistance. Probably has no oxalate oxidase activity even if the active site is conserved. This chain is Germin-like protein 8-10 (GLP2), found in Oryza sativa subsp. japonica (Rice).